Consider the following 101-residue polypeptide: Small ribosomal subunit protein uS14 (101 aa).

This sequence belongs to the universal ribosomal protein uS14 family. Part of the 30S ribosomal subunit. Contacts proteins S3 and S10.

In terms of biological role, binds 16S rRNA, required for the assembly of 30S particles and may also be responsible for determining the conformation of the 16S rRNA at the A site. The sequence is that of Small ribosomal subunit protein uS14 from Rhizobium etli (strain CIAT 652).